The chain runs to 527 residues: Probable guanine deaminase (527 aa).

Residues His-79 and His-81 each contribute to the Zn(2+) site. Substrate-binding positions include 81–84 (HAPQ), 212–213 (RF), 239–242 (HISE), and Asp-329. His-239 and Asp-329 together coordinate Zn(2+).

It belongs to the metallo-dependent hydrolases superfamily. ATZ/TRZ family. Zn(2+) is required as a cofactor.

The catalysed reaction is guanine + H2O + H(+) = xanthine + NH4(+). It functions in the pathway purine metabolism; guanine degradation; xanthine from guanine: step 1/1. Catalyzes the hydrolytic deamination of guanine, producing xanthine and ammonia. The protein is Probable guanine deaminase of Schizosaccharomyces pombe (strain 972 / ATCC 24843) (Fission yeast).